We begin with the raw amino-acid sequence, 154 residues long: CS6 fimbrial subunit A (154 aa).

A signal peptide spans Met-1–Ala-18.

It is found in the fimbrium. Its function is as follows. Fimbriae (also called pili), polar filaments radiating from the surface of the bacterium to a length of 0.5-1.5 micrometers and numbering 100-300 per cell, enable bacteria to colonize the epithelium of specific host organs. The sequence is that of CS6 fimbrial subunit A (cssA) from Escherichia coli.